The primary structure comprises 363 residues: Aspartate carbamoyltransferase, chloroplastic (363 aa).

A disordered region spans residues 1–21; that stretch reads MAAARATLPLPRVPAPSPRPQ. The N-terminal 36 residues, 1-36, are a transit peptide targeting the chloroplast; the sequence is MAAARATLPLPRVPAPSPRPQLRPFPSLPARRGAVA. Positions 11–21 are enriched in pro residues; that stretch reads PRVPAPSPRPQ. The carbamoyl phosphate site is built by Arg-109 and Thr-110. Positions 109 and 110 each coordinate UMP. L-aspartate is bound at residue Lys-139. 3 residues coordinate carbamoyl phosphate: Arg-160, His-188, and Gln-191. UMP is bound by residues Arg-160 and His-188. 2 residues coordinate UMP: Arg-221 and Arg-283. Positions 221 and 283 each coordinate L-aspartate. Carbamoyl phosphate contacts are provided by Leu-323 and Pro-324.

The protein belongs to the aspartate/ornithine carbamoyltransferase superfamily. ATCase family. Homotrimer.

It is found in the plastid. The protein localises to the chloroplast. The enzyme catalyses carbamoyl phosphate + L-aspartate = N-carbamoyl-L-aspartate + phosphate + H(+). Its pathway is pyrimidine metabolism; UMP biosynthesis via de novo pathway; (S)-dihydroorotate from bicarbonate: step 2/3. Its activity is regulated as follows. Feedback inhibited by UMP. Its function is as follows. Catalyzes the condensation of carbamoyl phosphate and aspartate to form carbamoyl aspartate and inorganic phosphate, the committed step in the de novo pyrimidine nucleotide biosynthesis pathway. The chain is Aspartate carbamoyltransferase, chloroplastic (PYRB) from Oryza sativa subsp. japonica (Rice).